The chain runs to 401 residues: Argininosuccinate synthase (401 aa).

A8–S16 serves as a coordination point for ATP. Position 86 (Y86) interacts with L-citrulline. G116 lines the ATP pocket. L-aspartate-binding residues include T118, N122, and D123. N122 is a binding site for L-citrulline. L-citrulline-binding residues include R126, S174, E258, and Y270.

The protein belongs to the argininosuccinate synthase family. Type 1 subfamily. As to quaternary structure, homotetramer.

The protein localises to the cytoplasm. The enzyme catalyses L-citrulline + L-aspartate + ATP = 2-(N(omega)-L-arginino)succinate + AMP + diphosphate + H(+). Its pathway is amino-acid biosynthesis; L-arginine biosynthesis; L-arginine from L-ornithine and carbamoyl phosphate: step 2/3. This chain is Argininosuccinate synthase, found in Acidothermus cellulolyticus (strain ATCC 43068 / DSM 8971 / 11B).